Here is a 735-residue protein sequence, read N- to C-terminus: DNA replication licensing factor mcm5 (735 aa).

An MCM domain is found at 332–538; the sequence is IYETVAKSIA…RDMTLAKHVM (207 aa). Arg-372 provides a ligand contact to ADP. The Arginine finger motif lies at 513–516; the sequence is SRFD.

It belongs to the MCM family. In terms of assembly, component of the mcm2-7 complex (RLF-M). The complex forms a toroidal hexameric ring with the proposed subunit order mcm2-mcm6-mcm4-mcm7-mcm3-mcm5. The heterodimer of mmcm3/mcm5 interacts with mcm4, mmcm6, mcm7 and weakly with mcm2. Component of the CMG helicase complex, composed of the mcm2-7 complex, the GINS complex and cdc45.

The protein localises to the nucleus. Its subcellular location is the chromosome. It carries out the reaction ATP + H2O = ADP + phosphate + H(+). Its function is as follows. Acts as a component of the MCM2-7 complex (MCM complex) which is the replicative helicase essential for 'once per cell cycle' DNA replication initiation and elongation in eukaryotic cells. Core component of CDC45-MCM-GINS (CMG) helicase, the molecular machine that unwinds template DNA during replication, and around which the replisome is built. The active ATPase sites in the MCM2-7 ring are formed through the interaction surfaces of two neighboring subunits such that a critical structure of a conserved arginine finger motif is provided in trans relative to the ATP-binding site of the Walker A box of the adjacent subunit. The six ATPase active sites, however, are likely to contribute differentially to the complex helicase activity. The sequence is that of DNA replication licensing factor mcm5 from Xenopus tropicalis (Western clawed frog).